A 129-amino-acid chain; its full sequence is Glycine cleavage system H protein (129 aa).

The Lipoyl-binding domain maps to 24-106 (TYTVGITEHA…YADGWIFKIK (83 aa)). Lys65 is modified (N6-lipoyllysine).

This sequence belongs to the GcvH family. In terms of assembly, the glycine cleavage system is composed of four proteins: P, T, L and H. (R)-lipoate is required as a cofactor.

Its function is as follows. The glycine cleavage system catalyzes the degradation of glycine. The H protein shuttles the methylamine group of glycine from the P protein to the T protein. The polypeptide is Glycine cleavage system H protein (Salmonella arizonae (strain ATCC BAA-731 / CDC346-86 / RSK2980)).